The chain runs to 801 residues: Cation/H(+) antiporter 28 (801 aa).

Transmembrane regions (helical) follow at residues 24 to 44 (ALKILVFIAIFVVRTLLHYLM), 77 to 97 (SITLNNIIEFGMICHMFVMGL), 113 to 133 (FIAYTSMITTFVLAFVTTPFL), 140 to 160 (PYIFSLALSLMASSTGSPILT), 179 to 199 (AAGVHTDMISTLLYCFGFIFF), 216 to 236 (LLMFCLFLAQVTFTSIVSPIF), 252 to 272 (GSHLVMSLAFVVLICSFPTWP), 275 to 292 (SMYNPILSAFTAGLFLPN), 304 to 324 (INYLLSTVFYPIFFFWVGFII), 343 to 363 (LLGTVIAGKVTGTVLCGLLLG), 371 to 391 (SLGLLLTTKGHFHVYLAALAI), and 403 to 423 (LIIFIIVFTVVYSPFVVMDII).

This sequence belongs to the monovalent cation:proton antiporter 2 (CPA2) transporter (TC 2.A.37) family. CHX (TC 2.A.37.4) subfamily. Specifically expressed in pollen.

It localises to the membrane. In terms of biological role, may operate as a cation/H(+) antiporter. The chain is Cation/H(+) antiporter 28 (CHX28) from Arabidopsis thaliana (Mouse-ear cress).